Consider the following 341-residue polypeptide: Dye-decolorizing peroxidase (341 aa).

D148 serves as the catalytic Proton acceptor. H221 is a heme binding site. Positions 304-341 (FLDDPPDAPTRLVPEATFTAPISDGSLGIGSLKRSAQQ) are targeting peptide.

The protein belongs to the DyP-type peroxidase family. Homohexamer. Heme b serves as cofactor.

It is found in the encapsulin nanocompartment. Cargo protein of a type 1 encapsulin nanocompartment. Has both general peroxidase activity and dye-decolorizing activity. Can catalyze the oxidation of both protoporphyrinogen IX and coproporphyrinogen III to their corresponding porphyrins. Also efficiently decolorizes the dyes alizarin red and Cibacron blue F3GA. This cargo-loaded encapsulin nanocompartment is probably involved in protection against oxidative damage. The chain is Dye-decolorizing peroxidase from Rhodococcus erythropolis (strain PR4 / NBRC 100887).